A 363-amino-acid polypeptide reads, in one-letter code: G-protein coupled receptor 6 (363 aa).

The Extracellular portion of the chain corresponds to 1 to 75 (MNASAAALNE…SGLLLSAVNP (75 aa)). N-linked (GlcNAc...) asparagine glycans are attached at residues Asn2 and Asn9. A disordered region spans residues 29-48 (GAPDTGEWGPPAASAALGGG). N-linked (GlcNAc...) asparagine glycosylation is present at Asn52. Residues 76-95 (WDVLLCVSGTVIAGENALVV) traverse the membrane as a helical segment. Topologically, residues 96–107 (ALIASTPALRTP) are cytoplasmic. A helical membrane pass occupies residues 108 to 131 (MFVLVGSLATADLLAGCGLILHFV). Residues 132-143 (FQYVVPSETVSL) lie on the Extracellular side of the membrane. The helical transmembrane segment at 144–165 (LMVGFLVASFAASVSSLLAITV) threads the bilayer. Topologically, residues 166 to 186 (DRYLSLYNALTYYSRRTLLGV) are cytoplasmic. A helical transmembrane segment spans residues 187–206 (HLLLAATWTVSLGLGLLPVL). Residues 207-231 (GWNCLADRTSCSVVRPLTRSHVALL) are Extracellular-facing. The chain crosses the membrane as a helical span at residues 232–250 (STSFFVVFGIMLHLYVRIC). Residues 251 to 278 (QVVWRHAHQIALQQHCLAPPHLAATRKG) are Cytoplasmic-facing. Residues 279 to 305 (VGTLAVVLGTFGASWLPFAIYCVVGSQ) traverse the membrane as a helical segment. Residues 306–310 (EDPAI) are Extracellular-facing. A helical membrane pass occupies residues 311 to 332 (YTYATLLPATYNSMINPIIYAF). The Cytoplasmic portion of the chain corresponds to 333 to 363 (RNQEIQRALWLLFCGCFQSKVPFRSRSPSEV). Cys346 carries the S-palmitoyl cysteine lipid modification. Residues Ser357, Ser359, and Ser361 each carry the phosphoserine modification.

Belongs to the G-protein coupled receptor 1 family. Mainly expressed in the brain. Selectively expressed in striatopallidal neurons in the striatum.

It is found in the cell membrane. Orphan receptor with constitutive G(s) signaling activity that activate cyclic AMP. Promotes neurite outgrowth and blocks myelin inhibition in neurons. The polypeptide is G-protein coupled receptor 6 (Gpr6) (Mus musculus (Mouse)).